The sequence spans 101 residues: DNA-binding protein Fis (101 aa).

The segment at residues 77–96 (QTRAANMLGINRGTLRKKLK) is a DNA-binding region (H-T-H motif).

The protein belongs to the transcriptional regulatory Fis family. As to quaternary structure, homodimer.

Functionally, activates ribosomal RNA transcription. Plays a direct role in upstream activation of rRNA promoters. In Shewanella sediminis (strain HAW-EB3), this protein is DNA-binding protein Fis.